Reading from the N-terminus, the 373-residue chain is Probable jasmonic acid carboxyl methyltransferase 1 (373 aa).

Y18 contributes to the S-adenosyl-L-homocysteine binding site. Q25 lines the jasmonate pocket. The S-adenosyl-L-homocysteine site is built by C59, N64, D96, L97, S135, and F136. Jasmonate contacts are provided by H156 and W157. Mg(2+) is bound by residues N174, D260, F262, and N263.

This sequence belongs to the methyltransferase superfamily. Type-7 methyltransferase family. It depends on Mg(2+) as a cofactor.

It is found in the cytoplasm. Its subcellular location is the nucleus. It carries out the reaction jasmonate + S-adenosyl-L-methionine = methyl (-)-jasmonate + S-adenosyl-L-homocysteine. The protein operates within lipid metabolism; oxylipin biosynthesis. Functionally, catalyzes the methylation of jasmonate into methyljasmonate, a plant volatile that acts as an important cellular regulator mediating diverse developmental processes and defense responses. The sequence is that of Probable jasmonic acid carboxyl methyltransferase 1 from Theobroma cacao (Cacao).